The primary structure comprises 440 residues: Ribulose bisphosphate carboxylase large chain (440 aa).

Lys4 carries the N6,N6,N6-trimethyllysine modification. Substrate contacts are provided by Asn113 and Thr163. Lys165 serves as the catalytic Proton acceptor. Lys167 is a binding site for substrate. The Mg(2+) site is built by Lys191, Asp193, and Glu194. At Lys191 the chain carries N6-carboxylysine. The active-site Proton acceptor is the His284. Residues Arg285, His317, and Ser369 each coordinate substrate.

This sequence belongs to the RuBisCO large chain family. Type I subfamily. As to quaternary structure, heterohexadecamer of 8 large chains and 8 small chains; disulfide-linked. The disulfide link is formed within the large subunit homodimers. Requires Mg(2+) as cofactor. In terms of processing, the disulfide bond which can form in the large chain dimeric partners within the hexadecamer appears to be associated with oxidative stress and protein turnover.

The protein resides in the plastid. The protein localises to the chloroplast. It carries out the reaction 2 (2R)-3-phosphoglycerate + 2 H(+) = D-ribulose 1,5-bisphosphate + CO2 + H2O. It catalyses the reaction D-ribulose 1,5-bisphosphate + O2 = 2-phosphoglycolate + (2R)-3-phosphoglycerate + 2 H(+). Its function is as follows. RuBisCO catalyzes two reactions: the carboxylation of D-ribulose 1,5-bisphosphate, the primary event in carbon dioxide fixation, as well as the oxidative fragmentation of the pentose substrate in the photorespiration process. Both reactions occur simultaneously and in competition at the same active site. In Pteris vittata (Chinese ladder brake), this protein is Ribulose bisphosphate carboxylase large chain.